A 243-amino-acid polypeptide reads, in one-letter code: Small ribosomal subunit protein uS3 (243 aa).

Positions 39 to 110 (IRTFIQKKYG…QVRINVVEVE (72 aa)) constitute a KH type-2 domain. Residues 216–243 (QTIPVGASPKRKASRRPQQFEDRSNENS) form a disordered region. The span at 233-243 (QQFEDRSNENS) shows a compositional bias: basic and acidic residues.

The protein belongs to the universal ribosomal protein uS3 family. As to quaternary structure, part of the 30S ribosomal subunit. Forms a tight complex with proteins S10 and S14.

Its function is as follows. Binds the lower part of the 30S subunit head. Binds mRNA in the 70S ribosome, positioning it for translation. In Prochlorococcus marinus (strain AS9601), this protein is Small ribosomal subunit protein uS3.